Reading from the N-terminus, the 146-residue chain is MGLTAHDRQLINSTWGKVCAKTIGKEALGRLLWTYPWTQRYFSSFGNLNSADAVFHNEAVAAHGEKVVTSIGEAIKHMDDIKGYYAQLSKYHSETLHVDPCNFKRFGGCLSISLARQFHEEYTPELHAAYEHLFDAIADALGKGYH.

One can recognise a Globin domain in the interval 2–146 (GLTAHDRQLI…IADALGKGYH (145 aa)). Residues His-63 and His-92 each coordinate heme b.

This sequence belongs to the globin family. In terms of assembly, heterotetramer of two alpha chains and two beta chains. In terms of tissue distribution, red blood cells.

In terms of biological role, involved in oxygen transport from the lung to the various peripheral tissues. The sequence is that of Hemoglobin subunit beta-1 (hbb1) from Xenopus borealis (Kenyan clawed frog).